The following is a 530-amino-acid chain: Sensor protein kinase PilS (530 aa).

6 helical membrane passes run 25-37, 57-70, 76-98, 101-119, 124-144, and 156-174; these read LTIG…LISS, WCYL…ALFL, LLPI…YAGG, PSGI…NILL, GLVI…FLSL, and AGGL…QALV. The Cytoplasmic segment spans residues 175–530; that stretch reads RRQEQTETLA…ITFAHPRKLS (356 aa). One can recognise a PAS domain in the interval 196–260; it reads ELNALILQRM…KQWRLNPSLR (65 aa). The Histidine kinase domain maps to 316–527; sequence GIAHEIRNPL…CFRITFAHPR (212 aa). Phosphohistidine; by autocatalysis is present on histidine 319.

Interacts with PilA.

Its subcellular location is the cell inner membrane. The catalysed reaction is ATP + protein L-histidine = ADP + protein N-phospho-L-histidine.. Member of the two-component regulatory system PilS/PilR that regulates the expression of multiple genes including the type IV pilus (T4P) major subunit PilA. Thereby, plays a major role in the regulation of multiple motility pathways. Functions as a membrane-associated protein kinase that phosphorylates PilR in response to environmental signals leading to activation of specific gene promoters including the pilin gene. The protein is Sensor protein kinase PilS (pilS) of Pseudomonas aeruginosa (strain ATCC 15692 / DSM 22644 / CIP 104116 / JCM 14847 / LMG 12228 / 1C / PRS 101 / PAO1).